A 110-amino-acid chain; its full sequence is U32-theraphotoxin-Cg1a (110 aa).

An N-terminal signal peptide occupies residues methionine 1–serine 19. The propeptide occupies leucine 20 to arginine 43. Intrachain disulfides connect cysteine 49-cysteine 63, cysteine 56-cysteine 69, cysteine 60-cysteine 105, and cysteine 62-cysteine 80.

Belongs to the neurotoxin 03 (Tx2) family. 02 subfamily. As to expression, expressed by the venom gland.

The protein resides in the secreted. Probable ion channel inhibitor. This chain is U32-theraphotoxin-Cg1a, found in Chilobrachys guangxiensis (Chinese earth tiger tarantula).